The chain runs to 666 residues: MSKALLAAWRINSLAPAPYPERLDTNDNALDRFLGSSLGQARLWASHLRLKRLRSFADKVVHRSNALSALSEAELAACVDDLRVKLARQGLTEDLTIEVFSLVREVCGRKLGLRHFPVQLIGGRVILAGKLAEMQTGEGKSLTAVLPAIAVALSGLPVHVITVNEYLVRRDARFMRPVYEFFGLDVGMVVPDQDPETRRNAYGCDVTYCVNKDLVFDYLRDRIDSNRDVSDARRAVARLFRGDENSRAYLRGLFFGIVDEADSVLIDEARTPLIISSSVSDKQGVDDYRRALDFCRQLRDGLHFRIFAADKLIQLTPAGRDHITNICGNLPGVWQVARARFELIEQALAAQLLYMRDKHYIVKDEKVQIVDEYTGRVMSDRTWESGLHQMIEVKEGCALTDRRKTISRITYQRFFRRYLRLGGMTGTAAEVVGELSAIFGLDVLRIPTNRAVQRKNLGTRIFLDTASRWDAVLKSIRRVRDEGRPVLIGTRSVAASEHLSSLLKTEGIEHSVINARQDEDEATVVEQAGRVGRVTVATNMAGRGTDIKLESGVSDRGGLHVILSEFHESPRIDRQLYGRAGRQGDKGSYESIVSLEDELFVLFSGEMARRVMSNSSFSNVITGMKAKLLRGSAQRSSERYYSRIRRQTVLEDQRLAKMLAFAGRGE.

Residues Q119, 137-141, and D546 each bind ATP; that span reads GEGKS.

It belongs to the SecA family. In terms of assembly, monomer and homodimer. Part of the essential Sec protein translocation apparatus which comprises SecA, SecYEG and auxiliary proteins SecDF-YajC and YidC.

It localises to the cell inner membrane. It is found in the cytoplasm. The catalysed reaction is ATP + H2O + cellular proteinSide 1 = ADP + phosphate + cellular proteinSide 2.. Functionally, part of the Sec protein translocase complex. Interacts with the SecYEG preprotein conducting channel. Has a central role in coupling the hydrolysis of ATP to the transfer of proteins into and across the cell membrane, serving both as a receptor for the preprotein-SecB complex and as an ATP-driven molecular motor driving the stepwise translocation of polypeptide chains across the membrane. This Nitrosospira multiformis (strain ATCC 25196 / NCIMB 11849 / C 71) protein is Protein translocase subunit SecA 2.